Here is a 514-residue protein sequence, read N- to C-terminus: Membrane-bound lytic murein transglycosylase F (514 aa).

The signal sequence occupies residues 1-30 (MKKLKINYLFIGILTLLLAAALWPSIPWFG). Residues 31–269 (KTENHVAAIQ…RIEEKYLGHG (239 aa)) form a non-LT domain region. Residues 270-514 (DDFDYVDTRS…LFTPQKKEEK (245 aa)) are LT domain. Residue Glu314 is part of the active site.

In the N-terminal section; belongs to the bacterial solute-binding protein 3 family. The protein in the C-terminal section; belongs to the transglycosylase Slt family.

The protein localises to the cell outer membrane. It carries out the reaction Exolytic cleavage of the (1-&gt;4)-beta-glycosidic linkage between N-acetylmuramic acid (MurNAc) and N-acetylglucosamine (GlcNAc) residues in peptidoglycan, from either the reducing or the non-reducing ends of the peptidoglycan chains, with concomitant formation of a 1,6-anhydrobond in the MurNAc residue.. Functionally, murein-degrading enzyme that degrades murein glycan strands and insoluble, high-molecular weight murein sacculi, with the concomitant formation of a 1,6-anhydromuramoyl product. Lytic transglycosylases (LTs) play an integral role in the metabolism of the peptidoglycan (PG) sacculus. Their lytic action creates space within the PG sacculus to allow for its expansion as well as for the insertion of various structures such as secretion systems and flagella. In Salmonella arizonae (strain ATCC BAA-731 / CDC346-86 / RSK2980), this protein is Membrane-bound lytic murein transglycosylase F.